The chain runs to 101 residues: UPF0235 protein Mevan_0378 (101 aa).

Belongs to the UPF0235 family.

The protein is UPF0235 protein Mevan_0378 of Methanococcus vannielii (strain ATCC 35089 / DSM 1224 / JCM 13029 / OCM 148 / SB).